The following is a 550-amino-acid chain: Chaperonin GroEL (550 aa).

ATP is bound by residues 30 to 33 (TLGP), K51, 87 to 91 (DGTTT), G415, and D496. The segment at 528–550 (EGGDMPAMPPGGMGGMGGMGGMM) is disordered. Over residues 538 to 550 (GGMGGMGGMGGMM) the composition is skewed to gly residues.

The protein belongs to the chaperonin (HSP60) family. In terms of assembly, forms a cylinder of 14 subunits composed of two heptameric rings stacked back-to-back. Interacts with the co-chaperonin GroES.

The protein resides in the cytoplasm. The enzyme catalyses ATP + H2O + a folded polypeptide = ADP + phosphate + an unfolded polypeptide.. In terms of biological role, together with its co-chaperonin GroES, plays an essential role in assisting protein folding. The GroEL-GroES system forms a nano-cage that allows encapsulation of the non-native substrate proteins and provides a physical environment optimized to promote and accelerate protein folding. The polypeptide is Chaperonin GroEL (Chlorobium phaeobacteroides (strain BS1)).